The chain runs to 224 residues: dTDP-fucosamine acetyltransferase (224 aa).

The 131-residue stretch at 94–224 folds into the N-acetyltransferase domain; the sequence is PALRQLASAA…VESTAYWLYR (131 aa). Acetyl-CoA-binding positions include 168–174, Asn201, and Arg207; that span reads LAGRGAG. Tyr208 (proton donor) is an active-site residue.

This sequence belongs to the WecD family. As to quaternary structure, homodimer.

The catalysed reaction is dTDP-4-amino-4,6-dideoxy-alpha-D-galactose + acetyl-CoA = dTDP-4-acetamido-4,6-dideoxy-alpha-D-galactose + CoA + H(+). Its pathway is bacterial outer membrane biogenesis; enterobacterial common antigen biosynthesis. Its function is as follows. Catalyzes the acetylation of dTDP-fucosamine (dTDP-4-amino-4,6-dideoxy-D-galactose) to dTDP-Fuc4NAc, which is utilized in the biosynthesis of the enterobacterial common antigen (ECA). This is dTDP-fucosamine acetyltransferase from Escherichia coli O6:H1 (strain CFT073 / ATCC 700928 / UPEC).